A 139-amino-acid chain; its full sequence is Endoribonuclease YbeY (139 aa).

Zn(2+) contacts are provided by H107, H111, and D117.

The protein belongs to the endoribonuclease YbeY family. It depends on Zn(2+) as a cofactor.

The protein localises to the cytoplasm. Single strand-specific metallo-endoribonuclease involved in late-stage 70S ribosome quality control and in maturation of the 3' terminus of the 16S rRNA. The sequence is that of Endoribonuclease YbeY from Bacteroides fragilis (strain ATCC 25285 / DSM 2151 / CCUG 4856 / JCM 11019 / LMG 10263 / NCTC 9343 / Onslow / VPI 2553 / EN-2).